The chain runs to 475 residues: MAGKTLYDKLWDSHLVKQRDDGSALIYIDRHIIHEVTSPQAFEGLRLARRKPWRIDSIIATPDHNVPTTSERKGGIEAIEDQVSRLQVQTLDDNCDEYGITEFKMNDPRQGIVHVIGPEQGATLPGMSVVCGDSHTSTHGAFGALAHGIGTSEVEHVLATQCLVAKKMKNMLVSVEGQLPFGVTAKDIVLAVIGKIGTAGGNGYAIEFAGSAIRDLSIEGRMTICNMSIEAGARVGMVATDEKTIEYVKGRPFAPKGAEWDLAVEAWQDLVSDADAVFDTVVKLDAAQIKPQVSWGTSPEMVLAVDQNVPDPAQEPDLVKRGSIERALKYMGLKANQPITDIQLDRVFIGSCTNSRIEDLRAAADVAKGRKVAATIKQAIVVPGSGLIKAQAEKEGLDKVFIDAGFEWREPGCSMCLAMNPDRLGSGEHCASTSNRNFEGRQGAGGRTHLVSPAMAAAAAVTGRFIDVRELRNPA.

Positions 352, 413, and 416 each coordinate [4Fe-4S] cluster.

This sequence belongs to the aconitase/IPM isomerase family. LeuC type 1 subfamily. Heterodimer of LeuC and LeuD. [4Fe-4S] cluster is required as a cofactor.

The catalysed reaction is (2R,3S)-3-isopropylmalate = (2S)-2-isopropylmalate. Its pathway is amino-acid biosynthesis; L-leucine biosynthesis; L-leucine from 3-methyl-2-oxobutanoate: step 2/4. In terms of biological role, catalyzes the isomerization between 2-isopropylmalate and 3-isopropylmalate, via the formation of 2-isopropylmaleate. This is 3-isopropylmalate dehydratase large subunit from Pseudomonas syringae pv. tomato (strain ATCC BAA-871 / DC3000).